We begin with the raw amino-acid sequence, 160 residues long: Large ribosomal subunit protein uL22c (160 aa).

This sequence belongs to the universal ribosomal protein uL22 family. As to quaternary structure, part of the 50S ribosomal subunit.

It is found in the plastid. Its subcellular location is the chloroplast. In terms of biological role, this protein binds specifically to 23S rRNA. Functionally, the globular domain of the protein is located near the polypeptide exit tunnel on the outside of the subunit, while an extended beta-hairpin is found that lines the wall of the exit tunnel in the center of the 70S ribosome. In Arabidopsis thaliana (Mouse-ear cress), this protein is Large ribosomal subunit protein uL22c (rpl22).